The following is a 158-amino-acid chain: NAD(P)H-quinone oxidoreductase subunit J, chloroplastic (158 aa).

This sequence belongs to the complex I 30 kDa subunit family. NDH is composed of at least 16 different subunits, 5 of which are encoded in the nucleus.

It localises to the plastid. It is found in the chloroplast thylakoid membrane. It catalyses the reaction a plastoquinone + NADH + (n+1) H(+)(in) = a plastoquinol + NAD(+) + n H(+)(out). It carries out the reaction a plastoquinone + NADPH + (n+1) H(+)(in) = a plastoquinol + NADP(+) + n H(+)(out). Functionally, NDH shuttles electrons from NAD(P)H:plastoquinone, via FMN and iron-sulfur (Fe-S) centers, to quinones in the photosynthetic chain and possibly in a chloroplast respiratory chain. The immediate electron acceptor for the enzyme in this species is believed to be plastoquinone. Couples the redox reaction to proton translocation, and thus conserves the redox energy in a proton gradient. The polypeptide is NAD(P)H-quinone oxidoreductase subunit J, chloroplastic (Vitis vinifera (Grape)).